A 101-amino-acid polypeptide reads, in one-letter code: Phosphoribosyl-AMP cyclohydrolase (101 aa).

Residue Asp71 participates in Mg(2+) binding. Cys72 contacts Zn(2+). Residues Asp73 and Asp75 each contribute to the Mg(2+) site. The Zn(2+) site is built by Cys88 and Cys95.

It belongs to the PRA-CH family. As to quaternary structure, homodimer. Mg(2+) serves as cofactor. The cofactor is Zn(2+).

The protein localises to the cytoplasm. The enzyme catalyses 1-(5-phospho-beta-D-ribosyl)-5'-AMP + H2O = 1-(5-phospho-beta-D-ribosyl)-5-[(5-phospho-beta-D-ribosylamino)methylideneamino]imidazole-4-carboxamide. It participates in amino-acid biosynthesis; L-histidine biosynthesis; L-histidine from 5-phospho-alpha-D-ribose 1-diphosphate: step 3/9. In terms of biological role, catalyzes the hydrolysis of the adenine ring of phosphoribosyl-AMP. The polypeptide is Phosphoribosyl-AMP cyclohydrolase (Bacillus cereus (strain ATCC 10987 / NRS 248)).